Here is an 872-residue protein sequence, read N- to C-terminus: TATA box-binding protein-associated factor RNA polymerase I subunit B (872 aa).

The RRN7-type zinc-finger motif lies at 6-40; the sequence is ETMQLENMHCDVCEGTTFQEREGFYYCVECGTQKD. C15, C18, C32, and C35 together coordinate Zn(2+). Residues 41-72 are B-reader; that stretch reads QIRAVDITAEDNFDDTAAGRYTARTIRQKKDT. Residues 73-84 form a B-linker region; sequence EKEDEDDITSWE. Residues 85–312 are N-terminal cyclin fold; the sequence is FYNYVLRGFL…LPGNVAAKGK (228 aa). The segment at 187-206 is disordered; the sequence is DASGYRSHGGASESEGEQSL.

This sequence belongs to the RRN7/TAF1B family.

Its subcellular location is the nucleus. The protein resides in the nucleolus. In terms of biological role, component of RNA polymerase I core factor complex that acts as a GTF2B/TFIIB-like factor and plays a key role in multiple steps during transcription initiation such as pre-initiation complex (PIC) assembly and postpolymerase recruitment events in polymerase I (Pol I) transcription. Binds rDNA promoters and plays a role in Pol I recruitment. The sequence is that of TATA box-binding protein-associated factor RNA polymerase I subunit B from Drosophila melanogaster (Fruit fly).